Here is a 90-residue protein sequence, read N- to C-terminus: Small ribosomal subunit protein uS15 (90 aa).

Belongs to the universal ribosomal protein uS15 family. As to quaternary structure, part of the 30S ribosomal subunit. Forms a bridge to the 50S subunit in the 70S ribosome, contacting the 23S rRNA.

In terms of biological role, one of the primary rRNA binding proteins, it binds directly to 16S rRNA where it helps nucleate assembly of the platform of the 30S subunit by binding and bridging several RNA helices of the 16S rRNA. Its function is as follows. Forms an intersubunit bridge (bridge B4) with the 23S rRNA of the 50S subunit in the ribosome. This Campylobacter hominis (strain ATCC BAA-381 / DSM 21671 / CCUG 45161 / LMG 19568 / NCTC 13146 / CH001A) protein is Small ribosomal subunit protein uS15.